The primary structure comprises 317 residues: Acetyl-coenzyme A carboxylase carboxyl transferase subunit alpha (317 aa).

Residues 33-294 (NLDDEITRLQ…KKRLLADLAD (262 aa)) form the CoA carboxyltransferase C-terminal domain.

Belongs to the AccA family. Acetyl-CoA carboxylase is a heterohexamer composed of biotin carboxyl carrier protein (AccB), biotin carboxylase (AccC) and two subunits each of ACCase subunit alpha (AccA) and ACCase subunit beta (AccD).

The protein localises to the cytoplasm. It catalyses the reaction N(6)-carboxybiotinyl-L-lysyl-[protein] + acetyl-CoA = N(6)-biotinyl-L-lysyl-[protein] + malonyl-CoA. It functions in the pathway lipid metabolism; malonyl-CoA biosynthesis; malonyl-CoA from acetyl-CoA: step 1/1. In terms of biological role, component of the acetyl coenzyme A carboxylase (ACC) complex. First, biotin carboxylase catalyzes the carboxylation of biotin on its carrier protein (BCCP) and then the CO(2) group is transferred by the carboxyltransferase to acetyl-CoA to form malonyl-CoA. In Histophilus somni (strain 2336) (Haemophilus somnus), this protein is Acetyl-coenzyme A carboxylase carboxyl transferase subunit alpha.